A 176-amino-acid chain; its full sequence is Nucleoside triphosphate/diphosphate phosphatase (176 aa).

The active-site Proton donor is the R23. Mg(2+) is bound by residues N87, D103, D105, D107, D120, and E123.

This sequence belongs to the Ntdp family. Mg(2+) serves as cofactor.

It carries out the reaction a ribonucleoside 5'-triphosphate + H2O = a ribonucleoside 5'-diphosphate + phosphate + H(+). The enzyme catalyses a ribonucleoside 5'-diphosphate + H2O = a ribonucleoside 5'-phosphate + phosphate + H(+). Functionally, has nucleoside phosphatase activity towards nucleoside triphosphates and nucleoside diphosphates. The chain is Nucleoside triphosphate/diphosphate phosphatase from Bacillus pumilus (strain SAFR-032).